We begin with the raw amino-acid sequence, 782 residues long: Fibrinogen alpha chain (782 aa).

The first 19 residues, 1-19 (MLSLRVACLILSLASTVWT), serve as a signal peptide directing secretion. Positions 68–547 (GCRMKGLIDE…KRGRARTMRD (480 aa)) form a coiled coil. Residues 264–283 (RPGKDGASRGDLPGDSRGDS) show a composition bias toward basic and acidic residues. Residues 264 to 374 (RPGKDGASRG…PATRKEYHTG (111 aa)) are disordered. The residue at position 279 (Ser-279) is a Phosphoserine. Over residues 311-323 (SGSGSDGNWGSGT) the composition is skewed to gly residues. 2 stretches are compositionally biased toward low complexity: residues 324–344 (TGSD…SGSG) and 354–364 (GEFSEFGGSSS). Ser-326 is subject to Phosphoserine. An intrachain disulfide couples Cys-404 to Cys-434. Position 470 is a phosphoserine (Ser-470). Pro-499 bears the 4-hydroxyproline; by P4HA1 mark. The segment covering 522-536 (DEAASEAHQEGDTRT) has biased composition (basic and acidic residues). A disordered region spans residues 522-542 (DEAASEAHQEGDTRTTKRGRA). Residue Ser-526 is modified to Phosphoserine. The 242-residue stretch at 539-780 (RGRARTMRDC…AVRMKIRPLV (242 aa)) folds into the Fibrinogen C-terminal domain. Residue Asn-602 is glycosylated (N-linked (GlcNAc...) asparagine). Residues Asp-707, Asp-709, Trp-711, and Glu-713 each coordinate Ca(2+). Cys-715 and Cys-728 are oxidised to a cystine.

In terms of assembly, heterohexamer; disulfide linked. Contains 2 sets of 3 non-identical chains (alpha, beta and gamma). The 2 heterotrimers are in head to head conformation with the N-termini in a small central domain. Conversion of fibrinogen to fibrin is triggered by thrombin, which cleaves fibrinopeptides A and B from alpha and beta chains, and thus exposes the N-terminal polymerization sites responsible for the formation of the soft clot. The soft clot is converted into the hard clot by factor XIIIA which catalyzes the epsilon-(gamma-glutamyl)lysine cross-linking between gamma chains (stronger) and between alpha chains (weaker) of different monomers. Post-translationally, forms F13A-mediated cross-links between a glutamine and the epsilon-amino group of a lysine residue, forming fibronectin-fibrinogen heteropolymers. In terms of processing, phosphorylated by FAM20C in the extracellular medium.

It localises to the secreted. Functionally, cleaved by the protease thrombin to yield monomers which, together with fibrinogen beta (FGB) and fibrinogen gamma (FGG), polymerize to form an insoluble fibrin matrix. Fibrin has a major function in hemostasis as one of the primary components of blood clots. In addition, functions during the early stages of wound repair to stabilize the lesion and guide cell migration during re-epithelialization. Was originally thought to be essential for platelet aggregation, based on in vitro studies using anticoagulated blood. However, subsequent studies have shown that it is not absolutely required for thrombus formation in vivo. Enhances expression of SELP in activated platelets via an ITGB3-dependent pathway. Maternal fibrinogen is essential for successful pregnancy. Fibrin deposition is also associated with infection, where it protects against IFNG-mediated hemorrhage. May also facilitate the immune response via both innate and T-cell mediated pathways. The protein is Fibrinogen alpha chain (Fga) of Rattus norvegicus (Rat).